The sequence spans 220 residues: Probable N-acetyl-alpha-D-glucosaminyl L-malate deacetylase 2 (220 aa).

Zn(2+) contacts are provided by H11, D14, and H125.

It belongs to the PIGL family. Zn(2+) serves as cofactor.

It catalyses the reaction (S)-malyl N-acetyl-alpha-D-glucosaminide + H2O = (S)-malyl alpha-D-glucosaminide + acetate. Its function is as follows. Involved in bacillithiol (BSH) biosynthesis. Catalyzes the second step of the pathway, the deacetylation of N-acetylglucosaminylmalate (GlcNAc-Mal) to glucosamine malate (GlcN-Mal). Has weak activity compared with bshB1. This chain is Probable N-acetyl-alpha-D-glucosaminyl L-malate deacetylase 2, found in Bacillus cereus (strain ATCC 14579 / DSM 31 / CCUG 7414 / JCM 2152 / NBRC 15305 / NCIMB 9373 / NCTC 2599 / NRRL B-3711).